Reading from the N-terminus, the 544-residue chain is MAAKEVKFGNEARIKMLEGVNILADAVKVTLGPKGRNVVLDKSFGAPTITKDGVSVAREIELEDKFQNMGAQMVKEVASKANDAAGDGTTTATVLAQAIVNEGLKAVAAGMNPMDLKRGIDKAVIAAVAELQVLSQPCADNNAIAQVGTISANSDEKVGRLIAEAMDKVGRDGVITVEDGQGLDDELAVVEGMQFDRGYLSPYFVNKPETGAVELDDPFILLVDKKVSNIREMLPVLEGVAKAGKPLLIVAEDVEGEALATLVVNTMRGIVKVAAVKAPGFGDRRKAMLQDIAMLTSGGTVIEEVGMELEKATLEDLGRAKRIVITKENTTIIDGVGDAALIESRVAQIRQQIEETSSDYDREKLQERVAKLAGGVAVIKVGAATEVEMKEKKARVDDALHATRAAVEEGVVAGGGVALVRVAAKLAGLRGDNEDQNVGIKVALRAMEAPLRQIVINAGEEASVIANAVKNGEGNFGYNAYTEQYGDMLAMGILDPTKVTRSALQFASSIAGLMITTECMITELPKKDTPAMPDMGGMGGMGMM.

Residues 30-33, lysine 51, 87-91, glycine 415, and aspartate 495 each bind ATP; these read TLGP and DGTTT.

The protein belongs to the chaperonin (HSP60) family. Forms a cylinder of 14 subunits composed of two heptameric rings stacked back-to-back. Interacts with the co-chaperonin GroES.

It localises to the cytoplasm. The enzyme catalyses ATP + H2O + a folded polypeptide = ADP + phosphate + an unfolded polypeptide.. Functionally, together with its co-chaperonin GroES, plays an essential role in assisting protein folding. The GroEL-GroES system forms a nano-cage that allows encapsulation of the non-native substrate proteins and provides a physical environment optimized to promote and accelerate protein folding. The chain is Chaperonin GroEL from Aeromonas salmonicida.